The primary structure comprises 37 residues: Natriuretic peptide PNP (37 aa).

An intrachain disulfide couples C14 to C30.

In terms of tissue distribution, expressed by the venom gland.

It localises to the secreted. Increases urine flow and decreases blood pressure when administered to rats by intravenous injection. Inhibits thrombin-induced platelet aggregation. Stimulates cGMP production via the natriuretic peptide receptor-A (NPR1). In Pseudocerastes persicus (Persian horned viper), this protein is Natriuretic peptide PNP.